The primary structure comprises 612 residues: MENQLAKSTEERTFQYQDSLPSLPVPSLEESLKKYLESVKPFANQEEYKKTEEIVQKFQSGIGEKLHQKLLERAKGKRNWLEEWWLNVAYLDVRIPSQLNVNFAGPAAHFEHYWPPKEGTQLERGSITLWHNLNYWQLLRKEKVPVHKVGNTPLDMNQFRMLFSTCKVPGITRDSIMNYFRTESEGRSPNHIVVLCRGRAFVFDVIHEGCLVTPPELLRQLTYIHKKCHSEPDGPGIAALTSEERTRWAKAREYLIGLDPENLALLEKIQSSLLVYSMEDSSPHVTPEDYSEIIAAILIGDPTVRWGDKSYNLISFSNGVFGCNCDHAPFDAMIMVNISYYVDEKIFQNEGRWKGSEKVRDIPLPEELIFIVDEKVLNDINQAKAQYLREASDLQIAAYAFTSFGKKLTKNKMLHPDTFIQLALQLAYYRLHGHPGCCYETAMTRHFYHGRTETMRSCTVEAVRWCQSMQDPSVNLRERQQKMLQAFAKHNKMMKDCSAGKGFDRHLLGLLLIAKEEGLPVPELFTDPLFSKSGGGGNFVLSTSLVGYLRVQGVVVPMVHNGYGFFYHIRDDRFVVACSAWKSCPETDAEKLVQLTFCAFHDMIQLMNSTHL.

Methionine 1 bears the N-acetylmethionine mark. N6-succinyllysine is present on residues lysine 40 and lysine 57. Histidine 327 acts as the Proton acceptor in catalysis. CoA-binding positions include lysine 406 and 410–417; that span reads KNKMLHPD. The residue at position 406 (lysine 406) is an N6-acetyllysine; alternate. Lysine 406 is modified (N6-succinyllysine; alternate). Residues tyrosine 439, threonine 441, and threonine 452 each contribute to the (R)-carnitine site. The short motif at 610-612 is the Microbody targeting signal element; the sequence is THL.

The protein belongs to the carnitine/choline acetyltransferase family. Monomer.

The protein localises to the peroxisome. The catalysed reaction is octanoyl-CoA + (R)-carnitine = O-octanoyl-(R)-carnitine + CoA. It catalyses the reaction 4,8-dimethylnonanoyl-CoA + (R)-carnitine = O-4,8-dimethylnonanoyl-(R)-carnitine + CoA. The protein operates within lipid metabolism; fatty acid beta-oxidation. Functionally, beta-oxidation of fatty acids. The highest activity concerns the C6 to C10 chain length substrate. Converts the end product of pristanic acid beta oxidation, 4,8-dimethylnonanoyl-CoA, to its corresponding carnitine ester. In Homo sapiens (Human), this protein is Peroxisomal carnitine O-octanoyltransferase (CROT).